The sequence spans 233 residues: uncharacterized protein (233 aa).

Residues histidine 64, histidine 66, aspartate 68, histidine 69, histidine 143, aspartate 162, and histidine 212 each contribute to the Zn(2+) site.

The protein belongs to the metallo-beta-lactamase superfamily. Glyoxalase II family. The cofactor is Zn(2+).

This is an uncharacterized protein from Bacillus subtilis (strain 168).